Here is a 351-residue protein sequence, read N- to C-terminus: Soluble TNF receptor II (351 aa).

The first 19 residues, 1–19 (MKSVLYSYILFLSCIIING), serve as a signal peptide directing secretion. TNFR-Cys repeat units follow at residues 31–67 (KCKDNEYNRHNLCCLSCPPGTYASRLCDSKTNTNTQC) and 69–110 (PCGS…NRIC). Disulfide bonds link Cys32–Cys43, Cys44–Cys57, Cys47–Cys67, Cys70–Cys85, Cys88–Cys102, and Cys92–Cys110. Asn103, Asn191, and Asn250 each carry an N-linked (GlcNAc...) asparagine; by host glycan.

It belongs to the orthopoxvirus OPG002 family.

It is found in the secreted. Inhibits host immune defense by binding to host TNF and various chemokines in the extracellular space. Binds host CC chemokines (beta chemokines) and CXC chemokines (alpha chemokines). This is Soluble TNF receptor II (OPG002) from Bos taurus (Bovine).